A 157-amino-acid polypeptide reads, in one-letter code: Protein Smg (157 aa).

Belongs to the Smg family.

In Sodalis glossinidius (strain morsitans), this protein is Protein Smg.